The following is a 333-amino-acid chain: Tetraacyldisaccharide 4'-kinase (333 aa).

60 to 67 provides a ligand contact to ATP; sequence TVGGTGKT.

Belongs to the LpxK family.

It carries out the reaction a lipid A disaccharide + ATP = a lipid IVA + ADP + H(+). It functions in the pathway glycolipid biosynthesis; lipid IV(A) biosynthesis; lipid IV(A) from (3R)-3-hydroxytetradecanoyl-[acyl-carrier-protein] and UDP-N-acetyl-alpha-D-glucosamine: step 6/6. Transfers the gamma-phosphate of ATP to the 4'-position of a tetraacyldisaccharide 1-phosphate intermediate (termed DS-1-P) to form tetraacyldisaccharide 1,4'-bis-phosphate (lipid IVA). In Ectopseudomonas mendocina (strain ymp) (Pseudomonas mendocina), this protein is Tetraacyldisaccharide 4'-kinase.